Reading from the N-terminus, the 336-residue chain is Probable allantoicase (336 aa).

This sequence belongs to the allantoicase family.

It catalyses the reaction allantoate + H2O = (S)-ureidoglycolate + urea. It participates in nitrogen metabolism; (S)-allantoin degradation; (S)-ureidoglycolate from allantoate (aminidohydrolase route): step 1/1. The sequence is that of Probable allantoicase from Acinetobacter baumannii (strain AYE).